The following is a 341-amino-acid chain: MMPQSLPDTTTPKRRFRWPTGMPQLVALLLVLLVDSLVAPHFWQVVLQDGRLFGSPIDILNRAAPVALLAIGMTLVIATGGIDLSVGAVMAIAGATTAAMTVAGFSLPIVLLSALGTGILAGLWNGILVAILKIQPFVATLILMVAGRGVAQLITAGQIVTFNSPDLSWFGSGSLLFLPTPVIIAVLTLILFWLLTRKTALGMFIEAVGINIRAAKNAGVNTRIIVMLTYVLSGLCAAIAGIIVAADIRGADANNAGLWLELDAILAVVIGGGSLMGGRFNLLLSVVGALIIQGMNTGILLSGFPPEMNQVVKAVVVLCVLIVQSQRFISLIKGVRSRDKT.

Over 1-25 (MMPQSLPDTTTPKRRFRWPTGMPQL) the chain is Cytoplasmic. Residues 26–46 (VALLLVLLVDSLVAPHFWQVV) form a helical membrane-spanning segment. Topologically, residues 47-65 (LQDGRLFGSPIDILNRAAP) are periplasmic. 2 helical membrane-spanning segments follow: residues 66–86 (VALLAIGMTLVIATGGIDLSV) and 87–107 (GAVMAIAGATTAAMTVAGFSL). Residue P108 is a topological domain, periplasmic. The helical transmembrane segment at 109–129 (IVLLSALGTGILAGLWNGILV) threads the bilayer. At 130-136 (AILKIQP) the chain is on the cytoplasmic side. Residues 137–157 (FVATLILMVAGRGVAQLITAG) traverse the membrane as a helical segment. Residues 158-174 (QIVTFNSPDLSWFGSGS) lie on the Periplasmic side of the membrane. The chain crosses the membrane as a helical span at residues 175 to 195 (LLFLPTPVIIAVLTLILFWLL). The Cytoplasmic segment spans residues 196 to 223 (TRKTALGMFIEAVGINIRAAKNAGVNTR). Residues 224 to 244 (IIVMLTYVLSGLCAAIAGIIV) form a helical membrane-spanning segment. The Periplasmic segment spans residues 245 to 255 (AADIRGADANN). Residues 256–276 (AGLWLELDAILAVVIGGGSLM) traverse the membrane as a helical segment. Over 277-281 (GGRFN) the chain is Cytoplasmic. 2 consecutive transmembrane segments (helical) span residues 282–302 (LLLSVVGALIIQGMNTGILLS) and 303–323 (GFPPEMNQVVKAVVVLCVLIV). Residues 324–341 (QSQRFISLIKGVRSRDKT) are Cytoplasmic-facing.

This sequence belongs to the binding-protein-dependent transport system permease family. AraH/RbsC subfamily. The complex is composed of two ATP-binding proteins (YtfR), two transmembrane proteins (YtfT and YjfF) and a solute-binding protein (YtfQ).

Its subcellular location is the cell inner membrane. In terms of biological role, part of the ABC transporter complex YtfQRT-YjfF involved in galactofuranose transport. Probably responsible for the translocation of the substrate across the membrane. The protein is Galactofuranose transporter permease protein YtfT (ytfT) of Escherichia coli (strain K12).